We begin with the raw amino-acid sequence, 575 residues long: Dual specificity protein phosphatase YVH1 (575 aa).

Residues 185–213 (KHNNNNNNNNNNNNNNNNNNNNNNCCTFK) form a disordered region. Positions 187–208 (NNNNNNNNNNNNNNNNNNNNNN) are enriched in low complexity. A Tyrosine-protein phosphatase domain is found at 283-435 (NYKINQEEDT…LLLYEKMNYT (153 aa)). The active-site Phosphocysteine intermediate is the Cys-379. Zn(2+) contacts are provided by Cys-476 and Cys-530.

Belongs to the protein-tyrosine phosphatase family. Non-receptor class dual specificity subfamily. In terms of assembly, interacts with PES. Zn(2+) is required as a cofactor.

Its subcellular location is the cytoplasm. It localises to the nucleus. It carries out the reaction O-phospho-L-tyrosyl-[protein] + H2O = L-tyrosyl-[protein] + phosphate. The catalysed reaction is O-phospho-L-seryl-[protein] + H2O = L-seryl-[protein] + phosphate. Dual specificity protein phosphatase which dephosphorylates both phosphotyrosine and phosphoserine residues. The chain is Dual specificity protein phosphatase YVH1 from Plasmodium falciparum (isolate 3D7).